The sequence spans 435 residues: Bud site selection protein RAX1 (435 aa).

Residues 1–297 lie on the Cytoplasmic side of the membrane; sequence MKEELSKVSS…PFSNHTSISR (297 aa). The RGS domain occupies 159 to 248; the sequence is VDEIMKRRSQ…LEMDCFPKFL (90 aa). Serine 167 carries the post-translational modification Phosphoserine. A helical transmembrane segment spans residues 298-318; it reads IGFGLLWLGIGFWIGYVLIFL. Residues 319–325 are Extracellular-facing; it reads AYSRAIR. A helical transmembrane segment spans residues 326–346; sequence VVTVVPFTLGCYCIVCGMYQV. Over 347–409 the chain is Cytoplasmic; that stretch reads DIVYSWFGVT…FTRQLLRKRG (63 aa). A helical membrane pass occupies residues 410–430; that stretch reads LWCLLLVVGATAAFTVIFSCV. Residues 431–435 lie on the Extracellular side of the membrane; the sequence is PGRRV.

In terms of assembly, forms an heterodimeric complex with RAX2. Also interacts with BUD8 and BUD9.

Its subcellular location is the cell membrane. It localises to the bud neck. The protein localises to the bud tip. Its function is as follows. Required for the establishment of the bipolar budding pattern. Involved in selecting bud sites at both the distal and proximal poles of daughter cells as well as near previously used division sites on mother cells. The RAX1-RAX2 complex performs the asymmetric localization of the two cortical landmarks, BUD8 and BUD9, at the distal and proximal poles, respectively. In Saccharomyces cerevisiae (strain ATCC 204508 / S288c) (Baker's yeast), this protein is Bud site selection protein RAX1.